The chain runs to 176 residues: Protein CURLY FLAG LEAF 2 (176 aa).

The short motif at 41 to 46 is the EAR element; that stretch reads FLELSS. A WW domain is found at 48-82; sequence FSVPSHLEQCLDLKTGEIYYRSWNSGMRVKEDPRK. 2 disordered regions span residues 77-106 and 111-130; these read KEDP…SSEE and YESE…YHKE. Residues 93–106 show a composition bias toward low complexity; it reads SSGESSGTVFSSEE.

May interact with BHLH122/CFLAP1 and BHLH80/CFLAP2.

Its function is as follows. May negatively regulate the cuticle development by interacting with the HD-ZIP IV transcription factor HDG1. This chain is Protein CURLY FLAG LEAF 2, found in Arabidopsis thaliana (Mouse-ear cress).